Here is a 198-residue protein sequence, read N- to C-terminus: tRNA (pseudouridine(54)-N(1))-methyltransferase (198 aa).

Residues L130, G153, 176–181, and C186 each bind S-adenosyl-L-methionine; that span reads LSPLEL.

It belongs to the methyltransferase superfamily. TrmY family. In terms of assembly, homodimer.

Its subcellular location is the cytoplasm. The catalysed reaction is pseudouridine(54) in tRNA + S-adenosyl-L-methionine = N(1)-methylpseudouridine(54) in tRNA + S-adenosyl-L-homocysteine + H(+). In terms of biological role, specifically catalyzes the N1-methylation of pseudouridine at position 54 (Psi54) in tRNAs. The protein is tRNA (pseudouridine(54)-N(1))-methyltransferase of Methanococcus maripaludis (strain C7 / ATCC BAA-1331).